The following is an 853-amino-acid chain: DNA mismatch repair protein MutS (853 aa).

614–621 contacts ATP; sequence GPNMGGKS.

It belongs to the DNA mismatch repair MutS family.

In terms of biological role, this protein is involved in the repair of mismatches in DNA. It is possible that it carries out the mismatch recognition step. This protein has a weak ATPase activity. The chain is DNA mismatch repair protein MutS from Escherichia coli (strain SE11).